A 236-amino-acid chain; its full sequence is Uridylate kinase (236 aa).

Residue 10–13 (KLSG) coordinates ATP. Gly52 is a binding site for UMP. ATP-binding residues include Gly53 and Arg57. Residues Asp72 and 133 to 140 (TGNPFFTT) contribute to the UMP site. ATP contacts are provided by Thr160, Tyr166, and Asp169.

The protein belongs to the UMP kinase family. In terms of assembly, homohexamer.

The protein resides in the cytoplasm. It catalyses the reaction UMP + ATP = UDP + ADP. It functions in the pathway pyrimidine metabolism; CTP biosynthesis via de novo pathway; UDP from UMP (UMPK route): step 1/1. Its activity is regulated as follows. Inhibited by UTP. Functionally, catalyzes the reversible phosphorylation of UMP to UDP. This Cupriavidus pinatubonensis (strain JMP 134 / LMG 1197) (Cupriavidus necator (strain JMP 134)) protein is Uridylate kinase.